Consider the following 507-residue polypeptide: (6-4) photolyase (507 aa).

6,7-dimethyl-8-(1-D-ribityl)lumazine contacts are provided by residues Gly9–Asp10, Cys32–Tyr40, and Gly105. Residues His265–Ser269 and Asn273 contribute to the FAD site. Position 350 (Cys350) interacts with [4Fe-4S] cluster. Residues Tyr363–His366, Asp397, and Asn406 each bind FAD. Residues Cys438, Cys441, and Cys454 each contribute to the [4Fe-4S] cluster site.

This sequence belongs to the iron-sulfur bacterial cryptochrome/photolyase (FeS-BCP) family. FAD is required as a cofactor. Requires 6,7-dimethyl-8-(1-D-ribityl)lumazine as cofactor. The cofactor is [4Fe-4S] cluster.

It carries out the reaction (6-4) photoproduct (in DNA) = 2 pyrimidine residues (in DNA).. Functionally, photolyase involved in the repair of UV-induced (6-4) lesions in DNA. Catalyzes the photoreactivation of (6-4) pyrimidine-pyrimidone photoproducts by using blue-light energy. Can repair (6-4) photoproducts in ssDNA as well as in dsDNA. The sequence is that of (6-4) photolyase from Agrobacterium fabrum (strain C58 / ATCC 33970) (Agrobacterium tumefaciens (strain C58)).